The primary structure comprises 322 residues: Fructose-1,6-bisphosphatase class 1 (322 aa).

The Mg(2+) site is built by Glu84, Asp103, Leu105, and Asp106. Substrate contacts are provided by residues 106 to 109, Asn198, and Lys264; that span reads DGSS. Residue Glu270 coordinates Mg(2+).

It belongs to the FBPase class 1 family. As to quaternary structure, homotetramer. Mg(2+) is required as a cofactor.

The protein resides in the cytoplasm. It catalyses the reaction beta-D-fructose 1,6-bisphosphate + H2O = beta-D-fructose 6-phosphate + phosphate. The protein operates within carbohydrate biosynthesis; gluconeogenesis. The protein is Fructose-1,6-bisphosphatase class 1 of Colwellia psychrerythraea (strain 34H / ATCC BAA-681) (Vibrio psychroerythus).